The primary structure comprises 291 residues: 4-hydroxy-tetrahydrodipicolinate synthase (291 aa).

Threonine 44 contacts pyruvate. Tyrosine 132 (proton donor/acceptor) is an active-site residue. Lysine 160 (schiff-base intermediate with substrate) is an active-site residue. Pyruvate is bound at residue valine 202.

The protein belongs to the DapA family. As to quaternary structure, homotetramer; dimer of dimers.

It localises to the cytoplasm. It carries out the reaction L-aspartate 4-semialdehyde + pyruvate = (2S,4S)-4-hydroxy-2,3,4,5-tetrahydrodipicolinate + H2O + H(+). Its pathway is amino-acid biosynthesis; L-lysine biosynthesis via DAP pathway; (S)-tetrahydrodipicolinate from L-aspartate: step 3/4. In terms of biological role, catalyzes the condensation of (S)-aspartate-beta-semialdehyde [(S)-ASA] and pyruvate to 4-hydroxy-tetrahydrodipicolinate (HTPA). The sequence is that of 4-hydroxy-tetrahydrodipicolinate synthase from Clostridium perfringens (strain ATCC 13124 / DSM 756 / JCM 1290 / NCIMB 6125 / NCTC 8237 / Type A).